Reading from the N-terminus, the 119-residue chain is UPF0102 protein Nmul_A0195 (119 aa).

It belongs to the UPF0102 family.

This chain is UPF0102 protein Nmul_A0195, found in Nitrosospira multiformis (strain ATCC 25196 / NCIMB 11849 / C 71).